Reading from the N-terminus, the 247-residue chain is Segregation and condensation protein A (247 aa).

The protein belongs to the ScpA family. Component of a cohesin-like complex composed of ScpA, ScpB and the Smc homodimer, in which ScpA and ScpB bind to the head domain of Smc. The presence of the three proteins is required for the association of the complex with DNA.

It localises to the cytoplasm. In terms of biological role, participates in chromosomal partition during cell division. May act via the formation of a condensin-like complex containing Smc and ScpB that pull DNA away from mid-cell into both cell halves. The protein is Segregation and condensation protein A of Bacillus anthracis (strain A0248).